Reading from the N-terminus, the 358-residue chain is MANDENKQKALAAALGQIEKQFGKGSIMRLGENRSMDVETISTGSLSLDIALGAGGLPMGRIVEIYGPESSGKTTLTLQVIASAQREGKTCAFIDAEHALDPVYAKKLGVDIDNLLCSQPDTGEQALEICDALSRSGAVDVIVVDSVAALTPKAEIEGEIGDSHMGLAARMMSQAMRKLAGNLKNSNTLLIFINQIRMKIGVMFGNPETTTGGNALKFYASVRLDIRRTGSVKNGDEVVGSETRVKVVKNKIAAPFKQAEFQILYGEGINTFGELVDLGVKHKMVEKAGAWYSYNGDKIGQGKANATIYLKEHPEVSAELDKKLRELLLNNTGGFSSAVSDYVADYEDNGEEVKNEEF.

Glycine 67–threonine 74 contacts ATP.

Belongs to the RecA family.

It localises to the cytoplasm. Functionally, can catalyze the hydrolysis of ATP in the presence of single-stranded DNA, the ATP-dependent uptake of single-stranded DNA by duplex DNA, and the ATP-dependent hybridization of homologous single-stranded DNAs. It interacts with LexA causing its activation and leading to its autocatalytic cleavage. The polypeptide is Protein RecA (Xenorhabdus bovienii (Xenorhabdus nematophila subsp. bovienii)).